The following is a 565-amino-acid chain: CTP synthase (565 aa).

The tract at residues 1-272 (MARPKNVKHI…DKRVLKKLGI (272 aa)) is amidoligase domain. S18 serves as a coordination point for CTP. S18 contributes to the UTP binding site. ATP is bound at residue 19 to 24 (SLGKGI). Y59 serves as a coordination point for L-glutamine. D76 serves as a coordination point for ATP. Residues D76 and E146 each contribute to the Mg(2+) site. CTP is bound by residues 153 to 155 (DIE), 193 to 198 (KTKPTQ), and K229. Residues 193–198 (KTKPTQ) and K229 each bind UTP. Residues 299–543 (TIAVCGKYTE…VAAAKAFAFG (245 aa)) enclose the Glutamine amidotransferase type-1 domain. G363 lines the L-glutamine pocket. C390 (nucleophile; for glutamine hydrolysis) is an active-site residue. L-glutamine is bound by residues 391–394 (LGMQ), E414, and R471. Active-site residues include H516 and E518.

The protein belongs to the CTP synthase family. As to quaternary structure, homotetramer.

It catalyses the reaction UTP + L-glutamine + ATP + H2O = CTP + L-glutamate + ADP + phosphate + 2 H(+). It carries out the reaction L-glutamine + H2O = L-glutamate + NH4(+). The catalysed reaction is UTP + NH4(+) + ATP = CTP + ADP + phosphate + 2 H(+). It functions in the pathway pyrimidine metabolism; CTP biosynthesis via de novo pathway; CTP from UDP: step 2/2. Allosterically activated by GTP, when glutamine is the substrate; GTP has no effect on the reaction when ammonia is the substrate. The allosteric effector GTP functions by stabilizing the protein conformation that binds the tetrahedral intermediate(s) formed during glutamine hydrolysis. Inhibited by the product CTP, via allosteric rather than competitive inhibition. Functionally, catalyzes the ATP-dependent amination of UTP to CTP with either L-glutamine or ammonia as the source of nitrogen. Regulates intracellular CTP levels through interactions with the four ribonucleotide triphosphates. This is CTP synthase from Chlorobium phaeobacteroides (strain BS1).